We begin with the raw amino-acid sequence, 276 residues long: Putative translation initiation factor eIF-2B subunit 2-like (276 aa).

Belongs to the eIF-2B alpha/beta/delta subunits family. As to quaternary structure, complex of two different subunits.

Catalyzes the exchange of initiation factor 2-bound GDP for GTP. The polypeptide is Putative translation initiation factor eIF-2B subunit 2-like (Pyrococcus abyssi (strain GE5 / Orsay)).